The chain runs to 475 residues: Ribulose bisphosphate carboxylase large chain (475 aa).

A propeptide spanning residues 1 to 2 (MS) is cleaved from the precursor. Pro3 carries the post-translational modification N-acetylproline. Lys14 is modified (N6,N6,N6-trimethyllysine). The substrate site is built by Asn123 and Thr173. Lys175 serves as the catalytic Proton acceptor. A substrate-binding site is contributed by Lys177. Residues Lys201, Asp203, and Glu204 each contribute to the Mg(2+) site. At Lys201 the chain carries N6-carboxylysine. His294 functions as the Proton acceptor in the catalytic mechanism. 3 residues coordinate substrate: Arg295, His327, and Ser379.

The protein belongs to the RuBisCO large chain family. Type I subfamily. Heterohexadecamer of 8 large chains and 8 small chains; disulfide-linked. The disulfide link is formed within the large subunit homodimers. The cofactor is Mg(2+). The disulfide bond which can form in the large chain dimeric partners within the hexadecamer appears to be associated with oxidative stress and protein turnover.

The protein resides in the plastid. The protein localises to the chloroplast. It carries out the reaction 2 (2R)-3-phosphoglycerate + 2 H(+) = D-ribulose 1,5-bisphosphate + CO2 + H2O. It catalyses the reaction D-ribulose 1,5-bisphosphate + O2 = 2-phosphoglycolate + (2R)-3-phosphoglycerate + 2 H(+). Its function is as follows. RuBisCO catalyzes two reactions: the carboxylation of D-ribulose 1,5-bisphosphate, the primary event in carbon dioxide fixation, as well as the oxidative fragmentation of the pentose substrate in the photorespiration process. Both reactions occur simultaneously and in competition at the same active site. This Larix occidentalis (Western larch) protein is Ribulose bisphosphate carboxylase large chain.